The following is a 632-amino-acid chain: 2-hydroxyacyl-CoA lyase 2 (632 aa).

A helical transmembrane segment spans residues 10–30; that stretch reads AWGFFSSFLLLAFGTLVAALL. Thiamine diphosphate is bound at residue Glu98. A thiamine pyrophosphate binding region spans residues 470 to 550; it reads DFVGTAAYLV…VMALIGNDAG (81 aa). Residues Asp521 and Asn547 each contribute to the Mg(2+) site.

This sequence belongs to the TPP enzyme family. The cofactor is Mg(2+). Requires thiamine diphosphate as cofactor.

It is found in the endoplasmic reticulum membrane. It carries out the reaction 2-hydroxyoctadecanoyl-CoA = heptadecanal + formyl-CoA. The enzyme catalyses (2R)-hydroxyhexadecanoyl-CoA = pentadecanal + formyl-CoA. Endoplasmic reticulum 2-OH acyl-CoA lyase involved in the cleavage (C1 removal) reaction in the fatty acid alpha-oxydation in a thiamine pyrophosphate (TPP)-dependent manner. Involved in the phytosphingosine degradation pathway. This chain is 2-hydroxyacyl-CoA lyase 2 (ILVBL), found in Bos taurus (Bovine).